Consider the following 358-residue polypeptide: Peptide chain release factor 1 (358 aa).

Gln-235 is modified (N5-methylglutamine).

It belongs to the prokaryotic/mitochondrial release factor family. Post-translationally, methylated by PrmC. Methylation increases the termination efficiency of RF1.

It localises to the cytoplasm. Functionally, peptide chain release factor 1 directs the termination of translation in response to the peptide chain termination codons UAG and UAA. The chain is Peptide chain release factor 1 from Neisseria gonorrhoeae (strain ATCC 700825 / FA 1090).